Reading from the N-terminus, the 117-residue chain is Large ribosomal subunit protein bL20 (117 aa).

Belongs to the bacterial ribosomal protein bL20 family.

Its function is as follows. Binds directly to 23S ribosomal RNA and is necessary for the in vitro assembly process of the 50S ribosomal subunit. It is not involved in the protein synthesizing functions of that subunit. This Maridesulfovibrio salexigens (strain ATCC 14822 / DSM 2638 / NCIMB 8403 / VKM B-1763) (Desulfovibrio salexigens) protein is Large ribosomal subunit protein bL20.